The primary structure comprises 427 residues: Glutamyl-tRNA reductase (427 aa).

Substrate-binding positions include 49–52 (TCNR), serine 109, 114–116 (EGQ), and glutamine 120. Cysteine 50 functions as the Nucleophile in the catalytic mechanism. 188–193 (GAGKMA) provides a ligand contact to NADP(+).

Belongs to the glutamyl-tRNA reductase family. In terms of assembly, homodimer.

It catalyses the reaction (S)-4-amino-5-oxopentanoate + tRNA(Glu) + NADP(+) = L-glutamyl-tRNA(Glu) + NADPH + H(+). The protein operates within porphyrin-containing compound metabolism; protoporphyrin-IX biosynthesis; 5-aminolevulinate from L-glutamyl-tRNA(Glu): step 1/2. Its pathway is porphyrin-containing compound metabolism; chlorophyll biosynthesis. Feedback inhibition by heme. Functionally, catalyzes the NADPH-dependent reduction of glutamyl-tRNA(Glu) to glutamate 1-semialdehyde (GSA). The protein is Glutamyl-tRNA reductase of Synechocystis sp. (strain ATCC 27184 / PCC 6803 / Kazusa).